We begin with the raw amino-acid sequence, 300 residues long: Tyrosine recombinase XerC (300 aa).

The region spanning 2 to 88 is the Core-binding (CB) domain; the sequence is IQEGKLEQQF…SLRSFYTFLL (87 aa). Positions 109–294 constitute a Tyr recombinase domain; that stretch reads RLPKFFYSEE…TKEHLKSTYM (186 aa). Residues Arg150, Lys174, His246, Arg249, and His272 contribute to the active site. Tyr281 functions as the O-(3'-phospho-DNA)-tyrosine intermediate in the catalytic mechanism.

It belongs to the 'phage' integrase family. XerC subfamily. As to quaternary structure, forms a cyclic heterotetrameric complex composed of two molecules of XerC and two molecules of XerD.

Its subcellular location is the cytoplasm. Functionally, site-specific tyrosine recombinase, which acts by catalyzing the cutting and rejoining of the recombining DNA molecules. The XerC-XerD complex is essential to convert dimers of the bacterial chromosome into monomers to permit their segregation at cell division. It also contributes to the segregational stability of plasmids. In Listeria monocytogenes serotype 4b (strain F2365), this protein is Tyrosine recombinase XerC.